Consider the following 366-residue polypeptide: Alcohol dehydrogenase (366 aa).

Zn(2+)-binding residues include Cys41, His62, Glu63, and Asp167.

This sequence belongs to the zinc-containing alcohol dehydrogenase family. As to quaternary structure, homotetramer. Zn(2+) serves as cofactor.

It catalyses the reaction a primary alcohol + NAD(+) = an aldehyde + NADH + H(+). The enzyme catalyses a secondary alcohol + NAD(+) = a ketone + NADH + H(+). The catalysed reaction is (R,R)-butane-2,3-diol + NAD(+) = (R)-acetoin + NADH + H(+). It carries out the reaction an aldehyde + NAD(+) + H2O = a carboxylate + NADH + 2 H(+). Multifunctional alcohol dehydrogenase exhibiting NAD(+)-dependent dehydrogenase activities for 2,3-butanediol, ethanol and acetaldehyde, and reductase activities for acetoin (NADH-dependent), and diacetyl and acetaldehyde (independently of whether NADH or NADPH is the reductant). The rate of oxidation of 2,3-butanediol is much higher than for the oxidation of ethanol. Has acetaldehyde dehydrogenase activity leading to acetate formation. May function in the release of excess reducing power in the absence of exogenous hydrogen acceptors such as oxygen. The protein is Alcohol dehydrogenase (adh) of Cupriavidus necator (Alcaligenes eutrophus).